The following is a 349-amino-acid chain: Sexual stage-specific protein G37 (349 aa).

Positions 1–18 (MKLYLVTFLFFVIYKNKT) are cleaved as a signal peptide. At 19-91 (FVDCVTKKQD…INQVSNNIMR (73 aa)) the chain is on the extracellular side. Residues 92–112 (VYISLLSLFLFPYFSYIGIFG) form a helical membrane-spanning segment. Residues 113-117 (HSRNK) are Cytoplasmic-facing. A helical membrane pass occupies residues 118-138 (ANLTLSSLLAYFALLVSFFLF). At 139–140 (NG) the chain is on the extracellular side. Residues 141–161 (ILNIGFVTSLPLVVAVLIFIL) form a helical membrane-spanning segment. The Cytoplasmic segment spans residues 162–176 (GVSDCEINFLYKYTR). A helical membrane pass occupies residues 177-197 (YIFCFIISKLIYDVVTYISKD). Residues 198–218 (GANIFDYGFSGHIYMNLLRGK) lie on the Extracellular side of the membrane. A helical membrane pass occupies residues 219–239 (YYIVLKLIHLIILSLISLIII). The Cytoplasmic segment spans residues 240-262 (KICPKIFSNNHLKSPISITFDKY). Residues 263–283 (IISFLCSLPIATAISQVFYLL) form a helical membrane-spanning segment. Residues 284-305 (SKTINPIDPSIFFMIPSSINFS) are Extracellular-facing. The helical transmembrane segment at 306 to 326 (STGTIFSLSIWILMSYLMTFL) threads the bilayer. At 327-349 (RNKVEADFNNILNKIPNNLPDFI) the chain is on the cytoplasmic side.

Its subcellular location is the cell membrane. Its function is as follows. Involved in the development of male gametocytes. The protein is Sexual stage-specific protein G37 of Plasmodium berghei (strain Anka).